The sequence spans 403 residues: Protein Bel-2 (403 aa).

Belongs to the spumavirus protein Bel-2 family.

The protein is Protein Bel-2 (bel2) of Homo sapiens (Human).